A 76-amino-acid polypeptide reads, in one-letter code: CLAVATA3/ESR (CLE)-related protein 46 (76 aa).

Positions methionine 1 to cysteine 26 are cleaved as a signal peptide. Residues glutamate 53–histidine 76 are disordered. A hydroxyproline mark is found at proline 61 and proline 64. The O-linked (Ara...) hydroxyproline glycan is linked to proline 64.

It belongs to the CLV3/ESR signal peptide family. Post-translationally, the O-glycosylation (arabinosylation) of the hydroxyproline Pro-64 enhances binding affinity of the CLE46p peptide for its receptor.

The protein resides in the secreted. The protein localises to the extracellular space. Its function is as follows. Extracellular signal peptide that regulates cell fate. The protein is CLAVATA3/ESR (CLE)-related protein 46 of Arabidopsis thaliana (Mouse-ear cress).